The chain runs to 564 residues: Sulfite reductase [NADPH] hemoprotein beta-component 2 (564 aa).

Residues cysteine 426, cysteine 432, cysteine 471, and cysteine 475 each coordinate [4Fe-4S] cluster. Cysteine 475 provides a ligand contact to siroheme.

It belongs to the nitrite and sulfite reductase 4Fe-4S domain family. In terms of assembly, alpha(8)-beta(8). The alpha component is a flavoprotein, the beta component is a hemoprotein. It depends on siroheme as a cofactor. Requires [4Fe-4S] cluster as cofactor.

It carries out the reaction hydrogen sulfide + 3 NADP(+) + 3 H2O = sulfite + 3 NADPH + 4 H(+). It participates in sulfur metabolism; hydrogen sulfide biosynthesis; hydrogen sulfide from sulfite (NADPH route): step 1/1. Functionally, component of the sulfite reductase complex that catalyzes the 6-electron reduction of sulfite to sulfide. This is one of several activities required for the biosynthesis of L-cysteine from sulfate. This chain is Sulfite reductase [NADPH] hemoprotein beta-component 2, found in Klebsiella pneumoniae (strain 342).